A 119-amino-acid polypeptide reads, in one-letter code: Large ribosomal subunit protein bL20 (119 aa).

Belongs to the bacterial ribosomal protein bL20 family.

Its function is as follows. Binds directly to 23S ribosomal RNA and is necessary for the in vitro assembly process of the 50S ribosomal subunit. It is not involved in the protein synthesizing functions of that subunit. This chain is Large ribosomal subunit protein bL20, found in Afipia carboxidovorans (strain ATCC 49405 / DSM 1227 / KCTC 32145 / OM5) (Oligotropha carboxidovorans).